A 386-amino-acid chain; its full sequence is Cytotoxic granule associated RNA binding protein TIA1 (386 aa).

N-acetylmethionine is present on methionine 1. RRM domains follow at residues 7 to 83 (KTLY…WATT), 106 to 184 (FHVF…WATR), and 214 to 286 (CTVY…WGKE). The segment at 354-386 (MGPNYGVQPPQGQNGSMLPNQPSGYRVAGYETQ) is disordered. A compositionally biased stretch (polar residues) spans 363–376 (PQGQNGSMLPNQPS).

As to quaternary structure, homooligomer; homooligomerization is induced by Zn(2+). Interacts with FASTK; the interactions leads to its phosphorylation. Interacts (via RRM1 and the C-terminal glutamine-rich (Q) sequence) with SNRPC/U1-C (via N-terminus); thereby facilitating spliceosomal U1 snRNP recruitment to 5' splice sites. Post-translationally, phosphorylated by FASTK; phosphorylation occurs after FAS ligation in FAS-mediated apoptosis and before DNA fragmentation. Expressed in heart, small intestine, kidney, liver, lung, skeletal muscle, testes, pancreas, and ovary (at protein level).

It localises to the nucleus. It is found in the cytoplasm. Its subcellular location is the stress granule. Its function is as follows. RNA-binding protein involved in the regulation of alternative pre-RNA splicing and mRNA translation by binding to uridine-rich (U-rich) RNA sequences. Binds to U-rich sequences immediately downstream from a 5' splice sites in a uridine-rich small nuclear ribonucleoprotein (U snRNP)-dependent fashion, thereby modulating alternative pre-RNA splicing. Preferably binds to the U-rich IAS1 sequence in a U1 snRNP-dependent manner; this binding is optimal if a 5' splice site is adjacent to IAS1. Activates the use of heterologous 5' splice sites; the activation depends on the intron sequence downstream from the 5' splice site, with a preference for a downstream U-rich sequence. By interacting with SNRPC/U1-C, promotes recruitment and binding of spliceosomal U1 snRNP to 5' splice sites followed by U-rich sequences, thereby facilitating atypical 5' splice site recognition by U1 snRNP. Activates splicing of alternative exons with weak 5' splice sites followed by a U-rich stretch on its own pre-mRNA and on TIAR mRNA. Acts as a modulator of alternative splicing for the apoptotic FAS receptor, thereby promoting apoptosis. Binds to the 5' splice site region of FAS intron 5 to promote accumulation of transcripts that include exon 6 at the expense of transcripts in which exon 6 is skipped, thereby leading to the transcription of a membrane-bound apoptotic FAS receptor, which promotes apoptosis. Binds to a conserved AU-rich cis element in COL2A1 intron 2 and modulates alternative splicing of COL2A1 exon 2. Also binds to the equivalent AT-rich element in COL2A1 genomic DNA, and may thereby be involved in the regulation of transcription. Binds specifically to a polypyrimidine-rich controlling element (PCE) located between the weak 5' splice site and the intronic splicing silencer of CFTR mRNA to promote exon 9 inclusion, thereby antagonizing PTB1 and its role in exon skipping of CFTR exon 9. Involved in the repression of mRNA translation by binding to AU-rich elements (AREs) located in mRNA 3' untranslated regions (3' UTRs), including target ARE-bearing mRNAs encoding TNF and PTGS2. Also participates in the cellular response to environmental stress, by acting downstream of the stress-induced phosphorylation of EIF2S1/EIF2A to promote the recruitment of untranslated mRNAs to cytoplasmic stress granules (SGs), leading to stress-induced translational arrest. Formation and recruitment to SGs is regulated by Zn(2+). Possesses nucleolytic activity against cytotoxic lymphocyte target cells. Displays enhanced splicing regulatory activity compared with TIA isoform Long. In Homo sapiens (Human), this protein is Cytotoxic granule associated RNA binding protein TIA1 (TIA1).